The chain runs to 394 residues: Putative F-box protein At5g66830 (394 aa).

Residues 17-63 enclose the F-box domain; sequence DWCWSKLPSDLMQFVFDRLGFADFQRAKSVCSSWLSVSRNSQPNNQI.

This is Putative F-box protein At5g66830 from Arabidopsis thaliana (Mouse-ear cress).